Consider the following 493-residue polypeptide: Transcript termination protein A18 (493 aa).

The 157-residue stretch at 100–256 (MIESKRPLYI…NSIINIAKLS (157 aa)) folds into the Helicase ATP-binding domain. Position 113-120 (113-120 (LACGFGKT)) interacts with ATP. A DESH box motif is present at residues 206-209 (DESH).

The protein belongs to the helicase family. Poxviruses subfamily. In terms of assembly, interacts with G2. Might be part of a transcription complex composed at least of G2, A18, and H5.

The protein resides in the virion. Functionally, DNA helicase which seems to act as a postreplicative transcription termination factor. Involved in ATP-dependent release of nascent RNA. Forms a stable complex with single-stranded DNA, and to a lesser extent RNA. The chain is Transcript termination protein A18 from Homo sapiens (Human).